We begin with the raw amino-acid sequence, 300 residues long: Ribokinase (300 aa).

Residues 11–13, 39–43, and Glu139 contribute to the substrate site; these read SMD and GKGAN. ATP is bound by residues Asn183 and 210–215; that span reads TLGSEG. K(+) contacts are provided by Asp236 and Thr238. 241 to 242 is a binding site for ATP; it reads GD. Residue Asp242 participates in substrate binding. Residue Asp242 is the Proton acceptor of the active site. The K(+) site is built by Ser272, Lys275, and Gly277.

This sequence belongs to the carbohydrate kinase PfkB family. Ribokinase subfamily. As to quaternary structure, homodimer. The cofactor is Mg(2+).

The protein resides in the cytoplasm. It carries out the reaction D-ribose + ATP = D-ribose 5-phosphate + ADP + H(+). It participates in carbohydrate metabolism; D-ribose degradation; D-ribose 5-phosphate from beta-D-ribopyranose: step 2/2. With respect to regulation, activated by a monovalent cation that binds near, but not in, the active site. The most likely occupant of the site in vivo is potassium. Ion binding induces a conformational change that may alter substrate affinity. Its function is as follows. Catalyzes the phosphorylation of ribose at O-5 in a reaction requiring ATP and magnesium. The resulting D-ribose-5-phosphate can then be used either for sythesis of nucleotides, histidine, and tryptophan, or as a component of the pentose phosphate pathway. This chain is Ribokinase, found in Lactococcus lactis subsp. lactis (strain IL1403) (Streptococcus lactis).